The sequence spans 779 residues: Ribosome-releasing factor 2, mitochondrial (779 aa).

The 286-residue stretch at 68-353 (AKIRNIGIMA…AVTTYLPSPE (286 aa)) folds into the tr-type G domain. Residues 77-84 (AHIDAGKT), 141-145 (DTPGH), and 195-198 (NKMD) contribute to the GTP site.

Belongs to the TRAFAC class translation factor GTPase superfamily. Classic translation factor GTPase family. EF-G/EF-2 subfamily.

The protein localises to the mitochondrion. It carries out the reaction GTP + H2O = GDP + phosphate + H(+). In terms of biological role, mitochondrial GTPase that mediates the disassembly of ribosomes from messenger RNA at the termination of mitochondrial protein biosynthesis. Acts in collaboration with MRRF. GTP hydrolysis follows the ribosome disassembly and probably occurs on the ribosome large subunit. Not involved in the GTP-dependent ribosomal translocation step during translation elongation. In Mus musculus (Mouse), this protein is Ribosome-releasing factor 2, mitochondrial (Gfm2).